We begin with the raw amino-acid sequence, 466 residues long: UDP-N-acetylmuramoylalanine--D-glutamate ligase (466 aa).

Position 139-145 (139-145 (GTAGKGG)) interacts with ATP.

Belongs to the MurCDEF family.

It localises to the cytoplasm. The catalysed reaction is UDP-N-acetyl-alpha-D-muramoyl-L-alanine + D-glutamate + ATP = UDP-N-acetyl-alpha-D-muramoyl-L-alanyl-D-glutamate + ADP + phosphate + H(+). The protein operates within cell wall biogenesis; peptidoglycan biosynthesis. Functionally, cell wall formation. Catalyzes the addition of glutamate to the nucleotide precursor UDP-N-acetylmuramoyl-L-alanine (UMA). The polypeptide is UDP-N-acetylmuramoylalanine--D-glutamate ligase (Deinococcus geothermalis (strain DSM 11300 / CIP 105573 / AG-3a)).